A 623-amino-acid polypeptide reads, in one-letter code: METRTPRDPNTLSNYHNYVTRHTSLDFEIEFERKRLVGSVVLRMESLTDAEVDVVLDSSFLDVSAIKVDRQSAEFSIGERIEPYGSPLTIKLPAAVPKGKTVEIELTVATTEKCTALQWMEPAQTSNKKHPYMFSQCQANHARSVFPCQDTPDVKSTFSFALRSPLPVLASGLPTGASKYQPAKKDGASGTLKYTFEQPVAITSYLMAVASGDLACASIGPRSTVWSGPEELLECQQELEGEIEPFMKAIESIVKPTYQWTQYNVLILPPSFPYGGMENPVWTYATPSIISGDKQNIDVIAHELSHSWSGNLVSAASWEHFWLNEGWTTYLERRIQGVLHGESHRHFSAIIGWKALEESIERYGADHDFTKLVIDLKGKDPDDAFSSIPYEKGFHALYQFELLLGKDKWDNFIPHYFETFKFKSIDSYDFKACLIDFFAKDTEANKKLAEFDWDKLFYAPGYPPKPDFDQTMVKSCYKLADKWQYLITNNSSSDFKPHHSDVADWVSNQSVVFLEKVQSFAEKFSAEQIHLLGHTYGYDKTQNIEVLSRYLSAGLMAKAPETYQPSAELLGRIGRMKFVRPMYRLLEKADRKLAVETFEKNKDFYHPICRSMVEKDLFGDEKK.

Residues 136–138 and 273–278 contribute to the a peptide site; these read QCQ and PYGGME. His-302 lines the Zn(2+) pocket. Glu-303 (proton acceptor) is an active-site residue. Positions 306 and 325 each coordinate Zn(2+). Residue Tyr-390 is the Proton donor of the active site.

It belongs to the peptidase M1 family. Requires Zn(2+) as cofactor.

Its subcellular location is the cytoplasm. It is found in the nucleus. The enzyme catalyses an epoxide + H2O = an ethanediol. Aminopeptidase that preferentially cleaves di- and tripeptides. Also has low epoxide hydrolase activity (in vitro). Can hydrolyze the epoxide leukotriene LTA(4) but it forms preferentially 5,6-dihydroxy-7,9,11,14-eicosatetraenoic acid rather than the cytokine leukotriene B(4) as the product compared to the homologous mammalian enzyme (in vitro). The sequence is that of Leucine aminopeptidase 2 from Phaeosphaeria nodorum (strain SN15 / ATCC MYA-4574 / FGSC 10173) (Glume blotch fungus).